We begin with the raw amino-acid sequence, 201 residues long: Small ribosomal subunit protein uS4 (201 aa).

Residues 1–42 (MARYTGPVTRKSRRLGTDLVGGDQSFEKRPYPPGQHGRARIK) form a disordered region. Positions 91-157 (SRLDNVVYRA…VPFQIARETA (67 aa)) constitute an S4 RNA-binding domain.

The protein belongs to the universal ribosomal protein uS4 family. As to quaternary structure, part of the 30S ribosomal subunit. Contacts protein S5. The interaction surface between S4 and S5 is involved in control of translational fidelity.

One of the primary rRNA binding proteins, it binds directly to 16S rRNA where it nucleates assembly of the body of the 30S subunit. Its function is as follows. With S5 and S12 plays an important role in translational accuracy. This Mycobacterium marinum (strain ATCC BAA-535 / M) protein is Small ribosomal subunit protein uS4.